A 177-amino-acid chain; its full sequence is Outer membrane lipoprotein Blc (177 aa).

Positions 1–18 (MRLLPLVAAATAAFLVVA) are cleaved as a signal peptide. The N-palmitoyl cysteine moiety is linked to residue cysteine 19. The S-diacylglycerol cysteine moiety is linked to residue cysteine 19.

This sequence belongs to the calycin superfamily. Lipocalin family. In terms of assembly, homodimer.

It localises to the cell outer membrane. Functionally, involved in the storage or transport of lipids necessary for membrane maintenance under stressful conditions. Displays a binding preference for lysophospholipids. The chain is Outer membrane lipoprotein Blc (blc) from Escherichia coli O157:H7.